The primary structure comprises 61 residues: KDGYIIEHRGCKYSCFFGTNSWCNTECTLKKGSSGYCAWPACWCYGLPDNVKIFDSNNLKC.

Residues 1–61 (KDGYIIEHRG…KIFDSNNLKC (61 aa)) enclose the LCN-type CS-alpha/beta domain. 4 disulfide bridges follow: C11–C61, C15–C37, C23–C42, and C27–C44.

Belongs to the long (4 C-C) scorpion toxin superfamily. Sodium channel inhibitor family. Beta subfamily. Expressed by the venom gland.

The protein localises to the secreted. Functionally, shows antibacterial activity against both Gram-positive bacteria (B.subtilis, M.luteus, E.faecalis) and Gram-negative bacteria (P.aeruginosa, Y.enterocolitica, A.calcoaceticus). Modifies membrane sodium permeability on Y.enterocolitica. Is toxic to cockroaches and crabs, but is not toxic to mice. Does not induce haemolysis in human erythrocytes. Acts by inhibiting the sodium (Nav) currents. In Tityus discrepans (Venezuelan scorpion), this protein is Bactridin-1.